We begin with the raw amino-acid sequence, 884 residues long: Translation initiation factor IF-2 (884 aa).

Residues P58 to E248 form a disordered region. Residues V66–P77 are compositionally biased toward basic residues. Over residues E87 to E106 the composition is skewed to low complexity. Residues S172–A183 are compositionally biased toward basic residues. Over residues D207–A223 the composition is skewed to low complexity. Positions K229–G239 are enriched in basic residues. A tr-type G domain is found at K384 to K553. The tract at residues G393 to T400 is G1. G393–T400 contributes to the GTP binding site. The segment at G418 to H422 is G2. The tract at residues D439–G442 is G3. Residues D439 to H443 and N493 to D496 contribute to the GTP site. Positions N493–D496 are G4. The G5 stretch occupies residues S529–K531.

Belongs to the TRAFAC class translation factor GTPase superfamily. Classic translation factor GTPase family. IF-2 subfamily.

The protein resides in the cytoplasm. One of the essential components for the initiation of protein synthesis. Protects formylmethionyl-tRNA from spontaneous hydrolysis and promotes its binding to the 30S ribosomal subunits. Also involved in the hydrolysis of GTP during the formation of the 70S ribosomal complex. The polypeptide is Translation initiation factor IF-2 (Desulfosudis oleivorans (strain DSM 6200 / JCM 39069 / Hxd3) (Desulfococcus oleovorans)).